The primary structure comprises 161 residues: Phosphopantetheine adenylyltransferase (161 aa).

Residue S11 participates in substrate binding. ATP is bound by residues 11–12 and H19; that span reads SF. Residues K43, L75, and R89 each contribute to the substrate site. ATP-binding positions include 90-92, E100, and 125-131; these read GLR and YSYLSSS.

Belongs to the bacterial CoaD family. As to quaternary structure, homohexamer. Mg(2+) is required as a cofactor.

It localises to the cytoplasm. The catalysed reaction is (R)-4'-phosphopantetheine + ATP + H(+) = 3'-dephospho-CoA + diphosphate. Its pathway is cofactor biosynthesis; coenzyme A biosynthesis; CoA from (R)-pantothenate: step 4/5. In terms of biological role, reversibly transfers an adenylyl group from ATP to 4'-phosphopantetheine, yielding dephospho-CoA (dPCoA) and pyrophosphate. The polypeptide is Phosphopantetheine adenylyltransferase (Geotalea daltonii (strain DSM 22248 / JCM 15807 / FRC-32) (Geobacter daltonii)).